Consider the following 208-residue polypeptide: Holliday junction branch migration complex subunit RuvA (208 aa).

A domain I region spans residues Met1–Ala69. The interval Val70–Thr148 is domain II. The tract at residues Leu149–Gln159 is flexible linker. Positions Gln159–Gln208 are domain III.

This sequence belongs to the RuvA family. In terms of assembly, homotetramer. Forms an RuvA(8)-RuvB(12)-Holliday junction (HJ) complex. HJ DNA is sandwiched between 2 RuvA tetramers; dsDNA enters through RuvA and exits via RuvB. An RuvB hexamer assembles on each DNA strand where it exits the tetramer. Each RuvB hexamer is contacted by two RuvA subunits (via domain III) on 2 adjacent RuvB subunits; this complex drives branch migration. In the full resolvosome a probable DNA-RuvA(4)-RuvB(12)-RuvC(2) complex forms which resolves the HJ.

It is found in the cytoplasm. Its function is as follows. The RuvA-RuvB-RuvC complex processes Holliday junction (HJ) DNA during genetic recombination and DNA repair, while the RuvA-RuvB complex plays an important role in the rescue of blocked DNA replication forks via replication fork reversal (RFR). RuvA specifically binds to HJ cruciform DNA, conferring on it an open structure. The RuvB hexamer acts as an ATP-dependent pump, pulling dsDNA into and through the RuvAB complex. HJ branch migration allows RuvC to scan DNA until it finds its consensus sequence, where it cleaves and resolves the cruciform DNA. The sequence is that of Holliday junction branch migration complex subunit RuvA from Acaryochloris marina (strain MBIC 11017).